The sequence spans 232 residues: Ras association domain-containing protein 3 (232 aa).

Position 2 is an N-acetylserine (serine 2). The interval 25–46 is disordered; that stretch reads RAPPGKSRSGQPDVEKEKETHN. Over residues 37-46 the composition is skewed to basic and acidic residues; that stretch reads DVEKEKETHN. In terms of domain architecture, Ras-associating spans 78 to 180; it reads YTGFIKVQME…TLSFVLREHE (103 aa). Residues 181 to 228 enclose the SARAH domain; the sequence is IGEWEAFSLPELQNFLRILDKEEDEQLQSLKRRYTAYRQKLEEALGEV.

The protein resides in the cytoplasm. The protein localises to the cytoskeleton. The sequence is that of Ras association domain-containing protein 3 (Rassf3) from Mus musculus (Mouse).